Reading from the N-terminus, the 232-residue chain is Octanoyltransferase (232 aa).

Positions 44 to 219 (EHTADEVWVV…QLARQFGLVL (176 aa)) constitute a BPL/LPL catalytic domain. Substrate is bound by residues 83–90 (RGGQVTYH), 150–152 (ALG), and 163–165 (GLS). C181 acts as the Acyl-thioester intermediate in catalysis.

The protein belongs to the LipB family.

It localises to the cytoplasm. It catalyses the reaction octanoyl-[ACP] + L-lysyl-[protein] = N(6)-octanoyl-L-lysyl-[protein] + holo-[ACP] + H(+). Its pathway is protein modification; protein lipoylation via endogenous pathway; protein N(6)-(lipoyl)lysine from octanoyl-[acyl-carrier-protein]: step 1/2. Functionally, catalyzes the transfer of endogenously produced octanoic acid from octanoyl-acyl-carrier-protein onto the lipoyl domains of lipoate-dependent enzymes. Lipoyl-ACP can also act as a substrate although octanoyl-ACP is likely to be the physiological substrate. The protein is Octanoyltransferase of Xanthomonas euvesicatoria pv. vesicatoria (strain 85-10) (Xanthomonas campestris pv. vesicatoria).